Reading from the N-terminus, the 163-residue chain is Phosphopantetheine adenylyltransferase (163 aa).

T9 is a substrate binding site. ATP-binding positions include 9 to 10 (TF) and H17. The substrate site is built by K41, L73, and R87. ATP contacts are provided by residues 88 to 90 (GLR), E98, and 123 to 129 (YQFISGT).

This sequence belongs to the bacterial CoaD family. Homohexamer. Requires Mg(2+) as cofactor.

The protein localises to the cytoplasm. The catalysed reaction is (R)-4'-phosphopantetheine + ATP + H(+) = 3'-dephospho-CoA + diphosphate. It functions in the pathway cofactor biosynthesis; coenzyme A biosynthesis; CoA from (R)-pantothenate: step 4/5. In terms of biological role, reversibly transfers an adenylyl group from ATP to 4'-phosphopantetheine, yielding dephospho-CoA (dPCoA) and pyrophosphate. The chain is Phosphopantetheine adenylyltransferase from Herminiimonas arsenicoxydans.